Reading from the N-terminus, the 913-residue chain is DNA mismatch repair protein MutS (913 aa).

Positions 18–50 are disordered; it reads NNKQKEKTKIPEDLSLEDLKKESQKRPRQRKNS. Basic and acidic residues predominate over residues 19-42; that stretch reads NKQKEKTKIPEDLSLEDLKKESQK. 720–727 contacts ATP; sequence GPNASGKS.

The protein belongs to the DNA mismatch repair MutS family.

This protein is involved in the repair of mismatches in DNA. It is possible that it carries out the mismatch recognition step. This protein has a weak ATPase activity. In Prochlorococcus marinus (strain MIT 9301), this protein is DNA mismatch repair protein MutS.